The following is a 418-amino-acid chain: MEPLHPDQRRFLRRAGIAGRCGQGWHDRERPASGQGSGAAERGRLSRLGAAPARGGVSASLPVFPWDTLADAKALAGAHPDGIVDLSVGTPVDPVAPLIQEALAAASAAPGYPATAGTARLRESVVAALARRYGITRLTEAAVLPVIGTKELIAWLPTLLGLGGADLVVVPELAYPTYDVGARLAGTRVLRADALTQLGPQSPALLYLNSPSNPTGRVLGVDHLRKVVEWARGRGVLVVSDECYLGLGWDAEPVSVLHPSVCDGDHTGLLAVHSLSKSSSLAGYRAGFVVGDLEIVAELLAVRKHAGMMVPAPVQAAMVAALDDDAHERQQRERYAQRRAALLPALGSAGFAVDYSDAGLYLWATRGEPCRDSAAWLAQRGILVAPGDFYGPGGAQHVRVALTATDERVAAAVGRLTC.

The interval 22–42 (GQGWHDRERPASGQGSGAAER) is disordered.

Belongs to the class-I pyridoxal-phosphate-dependent aminotransferase family. The cofactor is pyridoxal 5'-phosphate.

This is Probable aminotransferase Rv1178 from Mycobacterium tuberculosis (strain ATCC 25618 / H37Rv).